The chain runs to 151 residues: Small ribosomal subunit protein uS15z (151 aa).

Belongs to the universal ribosomal protein uS15 family.

This is Small ribosomal subunit protein uS15z (RPS13A) from Arabidopsis thaliana (Mouse-ear cress).